Here is a 488-residue protein sequence, read N- to C-terminus: Probable malate:quinone oxidoreductase (488 aa).

This sequence belongs to the MQO family. FAD serves as cofactor.

The enzyme catalyses (S)-malate + a quinone = a quinol + oxaloacetate. It functions in the pathway carbohydrate metabolism; tricarboxylic acid cycle; oxaloacetate from (S)-malate (quinone route): step 1/1. The protein is Probable malate:quinone oxidoreductase of Neisseria meningitidis serogroup B (strain ATCC BAA-335 / MC58).